The primary structure comprises 380 residues: Cytochrome b (380 aa).

The next 4 helical transmembrane spans lie at 34–54, 78–99, 114–134, and 179–199; these read FGSL…LLAM, WLIR…YLHI, WNTG…GYVL, and FFAL…IHLT. Residues H84 and H98 each contribute to the heme b site. Positions 183 and 197 each coordinate heme b. Position 202 (H202) interacts with a ubiquinone. 4 helical membrane-spanning segments follow: residues 227 to 247, 289 to 309, 321 to 341, and 348 to 368; these read LKDF…ALFS, LGGV…PFLH, ISQL…WVGS, and FIII…ILFP.

It belongs to the cytochrome b family. In terms of assembly, the cytochrome bc1 complex contains 11 subunits: 3 respiratory subunits (MT-CYB, CYC1 and UQCRFS1), 2 core proteins (UQCRC1 and UQCRC2) and 6 low-molecular weight proteins (UQCRH/QCR6, UQCRB/QCR7, UQCRQ/QCR8, UQCR10/QCR9, UQCR11/QCR10 and a cleavage product of UQCRFS1). This cytochrome bc1 complex then forms a dimer. Heme b serves as cofactor.

It is found in the mitochondrion inner membrane. Component of the ubiquinol-cytochrome c reductase complex (complex III or cytochrome b-c1 complex) that is part of the mitochondrial respiratory chain. The b-c1 complex mediates electron transfer from ubiquinol to cytochrome c. Contributes to the generation of a proton gradient across the mitochondrial membrane that is then used for ATP synthesis. The chain is Cytochrome b (MT-CYB) from Pelecanoides urinatrix (Common diving petrel).